The following is a 475-amino-acid chain: Ubiquitin carboxyl-terminal hydrolase calypso (475 aa).

One can recognise a UCH catalytic domain in the interval 44–275; sequence GWLELESDPG…IRFNLMAVVP (232 aa). The active-site Nucleophile is cysteine 130. Residue histidine 212 is the Proton donor of the active site. The stretch at 333–360 forms a coiled coil; that stretch reads AKDLQLLLKNLDTEIAINEQNLADENDR. Residues 374–402 form the ULD domain; that stretch reads NYDKFICTFLSMLAHQGVLGELVSQHLLP. Residues 404-475 form a positively charged C-terminal tail required for binding nucleosomes region; the sequence is KKVSGQSAAN…KGRNKCRKRK (72 aa). The tract at residues 411 to 475 is disordered; that stretch reads AANRISKQNS…KGRNKCRKRK (65 aa). The span at 419–460 shows a compositional bias: low complexity; sequence NSAASSAGANAGAAAGVTPKSQQQQQQPQTAASKNGKSPGKT. Over residues 461 to 475 the composition is skewed to basic residues; sequence PGRRRKGRNKCRKRK.

The protein belongs to the peptidase C12 family. BAP1 subfamily. As to quaternary structure, catalytic component of the polycomb repressive deubiquitinase (PR-DUB) complex, at least composed of caly/calypso, Asx and sba (MBD5/6 homolog). The PR-DUB complex associates with nucleosomes to mediate deubiquitination of histone H2AK118ub1 substrates; the association requires the positively charged C-terminal tail of caly, probably due to direct binding of DNA. Interacts (via ULD domain) with Asx (via DEUBAD domain); the interaction produces a stable heterodimer with a composite binding site for ubiquitin. Homodimerizes (via coiled-coil hinge-region between the UCH and ULD domains) to mediate assembly of 2 copies of the caly-Asx heterodimer into a bisymmetric tetramer; dimerization enhances PR-DUB association with nucleosomes.

The protein localises to the nucleus. The enzyme catalyses Thiol-dependent hydrolysis of ester, thioester, amide, peptide and isopeptide bonds formed by the C-terminal Gly of ubiquitin (a 76-residue protein attached to proteins as an intracellular targeting signal).. In terms of biological role, catalytic component of the polycomb repressive deubiquitinase (PR-DUB) complex, a complex that specifically mediates deubiquitination of histone H2A monoubiquitinated at 'Lys-119' (H2AK118ub1). Mediates bisymmetric organization of the PR-DUB complex and is involved in association with nucleosomes to mediate deubiquitination. Does not deubiquitinate monoubiquitinated histone H2B. Required to maintain the transcriptionally repressive state of homeotic genes throughout development. The PR-DUB complex has weak or no activity toward 'Lys-48'- and 'Lys-63'-linked polyubiquitin chains. Polycomb group (PcG) protein. The protein is Ubiquitin carboxyl-terminal hydrolase calypso of Drosophila persimilis (Fruit fly).